A 222-amino-acid chain; its full sequence is ATP synthase F(0) complex subunit a (222 aa).

The next 6 helical transmembrane spans lie at 7-27 (AFFDVPVGTMMLAIAFPAILL), 64-84 (WSLMLITLTLFIGLTNLLGLL), 93-113 (QLTVNLSMAIPLWTGTVILGF), 132-152 (FLIPMIIIIETISLLIRPVTL), 160-180 (ITAGHLLIHLTGTAALTLLSI), and 185-205 (ITVTFITVVVLTILELAVALI).

Belongs to the ATPase A chain family. As to quaternary structure, component of the ATP synthase complex composed at least of ATP5F1A/subunit alpha, ATP5F1B/subunit beta, ATP5MC1/subunit c (homooctomer), MT-ATP6/subunit a, MT-ATP8/subunit 8, ATP5ME/subunit e, ATP5MF/subunit f, ATP5MG/subunit g, ATP5MK/subunit k, ATP5MJ/subunit j, ATP5F1C/subunit gamma, ATP5F1D/subunit delta, ATP5F1E/subunit epsilon, ATP5PF/subunit F6, ATP5PB/subunit b, ATP5PD/subunit d, ATP5PO/subunit OSCP. ATP synthase complex consists of a soluble F(1) head domain (subunits alpha(3) and beta(3)) - the catalytic core - and a membrane F(0) domain - the membrane proton channel (subunits c, a, 8, e, f, g, k and j). These two domains are linked by a central stalk (subunits gamma, delta, and epsilon) rotating inside the F1 region and a stationary peripheral stalk (subunits F6, b, d, and OSCP). Interacts with DNAJC30; interaction is direct.

It localises to the mitochondrion inner membrane. The catalysed reaction is H(+)(in) = H(+)(out). In terms of biological role, subunit a, of the mitochondrial membrane ATP synthase complex (F(1)F(0) ATP synthase or Complex V) that produces ATP from ADP in the presence of a proton gradient across the membrane which is generated by electron transport complexes of the respiratory chain. ATP synthase complex consist of a soluble F(1) head domain - the catalytic core - and a membrane F(1) domain - the membrane proton channel. These two domains are linked by a central stalk rotating inside the F(1) region and a stationary peripheral stalk. During catalysis, ATP synthesis in the catalytic domain of F(1) is coupled via a rotary mechanism of the central stalk subunits to proton translocation. With the subunit c (ATP5MC1), forms the proton-conducting channel in the F(0) domain, that contains two crucial half-channels (inlet and outlet) that facilitate proton movement from the mitochondrial intermembrane space (IMS) into the matrix. Protons are taken up via the inlet half-channel and released through the outlet half-channel, following a Grotthuss mechanism. The sequence is that of ATP synthase F(0) complex subunit a from Mammuthus primigenius (Siberian woolly mammoth).